A 483-amino-acid polypeptide reads, in one-letter code: Zinc metalloproteinase/disintegrin VMP-II (483 aa).

Positions methionine 1–serine 20 are cleaved as a signal peptide. Positions isoleucine 21–glutamate 191 are excised as a propeptide. Residues arginine 198–proline 394 form the Peptidase M12B domain. Ca(2+) contacts are provided by glutamate 201 and aspartate 285. 3 disulfides stabilise this stretch: cysteine 309/cysteine 389, cysteine 349/cysteine 373, and cysteine 351/cysteine 356. Histidine 334 is a binding site for Zn(2+). Glutamate 335 is a catalytic residue. Zn(2+) contacts are provided by histidine 338 and histidine 344. Ca(2+) contacts are provided by cysteine 389 and asparagine 392. A propeptide spanning residues leucine 395 to glutamate 414 is cleaved from the precursor. Residues threonine 402 to alanine 483 form the Disintegrin domain. 4 disulfides stabilise this stretch: cysteine 425–cysteine 448, cysteine 439–cysteine 445, cysteine 444–cysteine 469, and cysteine 457–cysteine 476. The Cell attachment site; atypical (KGD) signature appears at lysine 461–aspartate 463.

It belongs to the venom metalloproteinase (M12B) family. P-II subfamily. P-IIe sub-subfamily. As to quaternary structure, heterodimer; disulfide-linked (disintegrin). Zn(2+) is required as a cofactor. In terms of tissue distribution, expressed by the venom gland.

The protein localises to the secreted. Inhibited by EDTA and 1,10-phenanthroline, but not by PMSF. Has fibrinolytic activity. The recombinant enzyme cleaves both alpha- (FGA) and beta-chains (FGB) of fibrinogen, but not the gamma-chain. The recombinant protein does not produce hemorrhage in mice and does not have effect on ADP- or collagen-stimulated platelet aggregation. Its function is as follows. Inhibits platelet aggregation induced by ADP, thrombin, platelet-activating factor and collagen. Acts by inhibiting fibrinogen interaction with platelet receptors GPIIb/GPIIIa (ITGA2B/ITGB3). The protein is Zinc metalloproteinase/disintegrin VMP-II of Agkistrodon piscivorus leucostoma (Western cottonmouth).